A 400-amino-acid polypeptide reads, in one-letter code: Phosphoglycerate kinase (400 aa).

Residues 23–25 (DLN), R38, 61–64 (HFGR), R120, and R153 each bind substrate. Residues K203, E325, and 355–358 (GGDT) contribute to the ATP site.

The protein belongs to the phosphoglycerate kinase family. As to quaternary structure, monomer.

The protein localises to the cytoplasm. The catalysed reaction is (2R)-3-phosphoglycerate + ATP = (2R)-3-phospho-glyceroyl phosphate + ADP. The protein operates within carbohydrate degradation; glycolysis; pyruvate from D-glyceraldehyde 3-phosphate: step 2/5. This chain is Phosphoglycerate kinase, found in Rhizobium leguminosarum bv. trifolii (strain WSM2304).